A 320-amino-acid chain; its full sequence is 1-aminocyclopropane-1-carboxylate oxidase 3 (320 aa).

The 101-residue stretch at 154 to 254 (PNFGTKVSNY…RMSIASFYNP (101 aa)) folds into the Fe2OG dioxygenase domain. 3 residues coordinate Fe cation: H178, D180, and H235.

It belongs to the iron/ascorbate-dependent oxidoreductase family. Requires Fe cation as cofactor. In terms of tissue distribution, flowers.

It carries out the reaction 1-aminocyclopropane-1-carboxylate + L-ascorbate + O2 = ethene + L-dehydroascorbate + hydrogen cyanide + CO2 + 2 H2O. It participates in alkene biosynthesis; ethylene biosynthesis via S-adenosyl-L-methionine; ethylene from S-adenosyl-L-methionine: step 2/2. The polypeptide is 1-aminocyclopropane-1-carboxylate oxidase 3 (ACO3) (Cucumis melo (Muskmelon)).